A 212-amino-acid chain; its full sequence is Pyridoxine/pyridoxamine 5'-phosphate oxidase (212 aa).

Substrate-binding positions include 9 to 12 and Lys67; that span reads RKSY. Residues 62–67, 77–78, Arg83, and Lys84 contribute to the FMN site; these read RIVLIK and FT. Positions 124, 128, and 132 each coordinate substrate. FMN is bound by residues 141–142 and Trp185; that span reads QS. Residue 191–193 coordinates substrate; sequence RLH. Arg195 serves as a coordination point for FMN.

Belongs to the pyridoxamine 5'-phosphate oxidase family. Homodimer. FMN serves as cofactor.

The enzyme catalyses pyridoxamine 5'-phosphate + O2 + H2O = pyridoxal 5'-phosphate + H2O2 + NH4(+). It carries out the reaction pyridoxine 5'-phosphate + O2 = pyridoxal 5'-phosphate + H2O2. Its pathway is cofactor metabolism; pyridoxal 5'-phosphate salvage; pyridoxal 5'-phosphate from pyridoxamine 5'-phosphate: step 1/1. It functions in the pathway cofactor metabolism; pyridoxal 5'-phosphate salvage; pyridoxal 5'-phosphate from pyridoxine 5'-phosphate: step 1/1. Functionally, catalyzes the oxidation of either pyridoxine 5'-phosphate (PNP) or pyridoxamine 5'-phosphate (PMP) into pyridoxal 5'-phosphate (PLP). The polypeptide is Pyridoxine/pyridoxamine 5'-phosphate oxidase (Verminephrobacter eiseniae (strain EF01-2)).